A 379-amino-acid polypeptide reads, in one-letter code: Succinate--CoA ligase [ADP-forming] subunit beta (379 aa).

An ATP-grasp domain is found at 9-235; sequence KEIAKNNGIP…GRELSEMEAI (227 aa). ATP is bound by residues lysine 45, glutamate 91, isoleucine 94, and glutamate 99. Residues asparagine 191 and aspartate 205 each contribute to the Mg(2+) site. Residues asparagine 255 and 312–314 contribute to the substrate site; that span reads GIT.

It belongs to the succinate/malate CoA ligase beta subunit family. Heterotetramer of two alpha and two beta subunits. Mg(2+) is required as a cofactor.

It catalyses the reaction succinate + ATP + CoA = succinyl-CoA + ADP + phosphate. The enzyme catalyses GTP + succinate + CoA = succinyl-CoA + GDP + phosphate. It participates in carbohydrate metabolism; tricarboxylic acid cycle; succinate from succinyl-CoA (ligase route): step 1/1. Its function is as follows. Succinyl-CoA synthetase functions in the citric acid cycle (TCA), coupling the hydrolysis of succinyl-CoA to the synthesis of either ATP or GTP and thus represents the only step of substrate-level phosphorylation in the TCA. The beta subunit provides nucleotide specificity of the enzyme and binds the substrate succinate, while the binding sites for coenzyme A and phosphate are found in the alpha subunit. The protein is Succinate--CoA ligase [ADP-forming] subunit beta of Staphylothermus marinus (strain ATCC 43588 / DSM 3639 / JCM 9404 / F1).